A 321-amino-acid polypeptide reads, in one-letter code: Malate dehydrogenase (321 aa).

NAD(+)-binding positions include 10 to 15 (GAGQIG) and aspartate 34. Arginine 83 and arginine 89 together coordinate substrate. NAD(+) is bound by residues asparagine 96 and 119 to 121 (VTN). Asparagine 121 and arginine 152 together coordinate substrate. The Proton acceptor role is filled by histidine 176.

The protein belongs to the LDH/MDH superfamily. MDH type 3 family.

The catalysed reaction is (S)-malate + NAD(+) = oxaloacetate + NADH + H(+). In terms of biological role, catalyzes the reversible oxidation of malate to oxaloacetate. In Azorhizobium caulinodans (strain ATCC 43989 / DSM 5975 / JCM 20966 / LMG 6465 / NBRC 14845 / NCIMB 13405 / ORS 571), this protein is Malate dehydrogenase.